The chain runs to 82 residues: MKGMILLISCLMLIEVVVECKEGYPLDTLNGCKVGCFFGTNSWCNDKCKSKTAAKGYCAWPSCYCYGFTDDSKIWDLKKNKC.

Residues 1 to 20 form the signal peptide; sequence MKGMILLISCLMLIEVVVEC. The LCN-type CS-alpha/beta domain maps to 21-82; it reads KEGYPLDTLN…KIWDLKKNKC (62 aa). 4 disulfide bridges follow: Cys32–Cys82, Cys36–Cys58, Cys44–Cys63, and Cys48–Cys65.

The protein belongs to the long (4 C-C) scorpion toxin superfamily. Sodium channel inhibitor family. Beta subfamily. As to expression, expressed by the venom gland.

It localises to the secreted. Functionally, beta toxins bind voltage-independently at site-4 of sodium channels (Nav) and shift the voltage of activation toward more negative potentials thereby affecting sodium channel activation and promoting spontaneous and repetitive firing. This is Toxin Tpa7 from Tityus pachyurus (Colombian scorpion).